Reading from the N-terminus, the 314-residue chain is Deoxymugineic acid synthase 1-A (314 aa).

Residues 1–21 form a disordered region; that stretch reads MGAGDKTAAGMPRIGMGTAVQ. Residue D44 coordinates NADP(+). Y49 serves as the catalytic Proton donor. H112 contributes to the substrate binding site. NADP(+) contacts are provided by residues 158–159, Q180, 258–266, and 273–281; these read AN, FDEARMREN, and ELTEEEHRR.

This sequence belongs to the aldo/keto reductase family. As to expression, mostly expressed in root tissues, observed in mesocotyl and embryonic roots, seedling roots, crown and seedling leafes, mature bracts, anthers, pistil, caryopsis and embryos.

It carries out the reaction 2'-deoxymugineate + NAD(+) = 3''-deamino-3''-oxonicotianamine + NADH + H(+). The enzyme catalyses 2'-deoxymugineate + NADP(+) = 3''-deamino-3''-oxonicotianamine + NADPH + H(+). It participates in siderophore biosynthesis. Functionally, catalyzes the reduction of a 3''-keto intermediate during the biosynthesis of 2'-deoxymugineic acid (DMA) from L-Met. Involved in the formation of phytosiderophores (MAs) belonging to the mugineic acid family and required to acquire iron. The sequence is that of Deoxymugineic acid synthase 1-A from Triticum aestivum (Wheat).